The sequence spans 557 residues: Small ribosomal subunit protein bS1 (557 aa).

S1 motif domains lie at 21 to 87 (GSIV…LSRE), 105 to 171 (SATV…VSRR), 192 to 260 (GMEV…LGLK), 277 to 347 (GTKL…LGLK), 364 to 434 (GDRV…LGVK), and 451 to 520 (GAIV…LSIR).

Belongs to the bacterial ribosomal protein bS1 family.

Functionally, binds mRNA; thus facilitating recognition of the initiation point. It is needed to translate mRNA with a short Shine-Dalgarno (SD) purine-rich sequence. This chain is Small ribosomal subunit protein bS1 (rpsA), found in Dickeya dadantii (strain 3937) (Erwinia chrysanthemi (strain 3937)).